The following is a 197-amino-acid chain: Cytochrome c-L (197 aa).

Residues 1-25 (MMNRVKIGTALLGLTLAGIALPALA) form the signal peptide. 3 residues coordinate heme c: C90, C93, and H94.

Post-translationally, binds 1 heme c group covalently per subunit.

It is found in the periplasm. Functionally, electron acceptor for MDH. Acts in methanol oxidation. In Methylorubrum extorquens (strain ATCC 14718 / DSM 1338 / JCM 2805 / NCIMB 9133 / AM1) (Methylobacterium extorquens), this protein is Cytochrome c-L (moxG).